Here is a 779-residue protein sequence, read N- to C-terminus: MFTKWRIFAVNHQRTFSVHLNTMCYCKIKANLKRLKTQLPLTRNYSSAPGIAGSDVKSLHSVINPPVAKIRNIGIMAHIDAGKTTTTERILYYSGYTRSLGDVDDGDTVTDFMAQERERGITIQSAAVTLDWKGYRVNLIDTPGHVDFTLEVERCLRVLDGAVAVFDASAGVEAQTLTVWRQADKHKIPRICFLNKMDKTGASFNYAVESIREKLKAKPLILQLPIGEARTFQGVVDVVNKEKLLWNSNSDDGKDFERMPLSEASDRELLKETIEARNSLIEQVADLDDEFADLVLGEFSENFDLVPAEKLQAAVHRVTLAQAAVPVLCGSALKNKGVQPLLDAVTTYLPSPEEREDRFLQWYEGDLCALAFKVLHDKQRGPLVFLRIYSGTLTPQLAVHNINRNCTERMSRLLLPFADQHVEIPSLTAGNIALTVGLKQTATGDTIVSSKSSALAAARRAGRGEREHGKKREAESLLLAGVEVPEPVFFCTIEPPSVAKQPDLDHALERLQREDPSLKVKLDPDSGQTVLCGMGELHIEIIHDRIKREYGLETYLGPLQVAYRETILNSVRATDTLDRVLGDKRHLVSAELEVRPAEEPCAVAKIEYADCVGEDLLQASREAIESAVHSACLQGPLLGSPVQDVAMTLHSLMIHPGTSTTMVTACISRCMQKALKKADKQVLEPLMSLEVTVSREYLSPVLADLAQRRGNIQEIQTRQDNRVVLGFVPLAEIMGYSTVLRTLTSGSATFALELSTYQAMSPQDQSALLNQRSGLAHVL.

The region spanning 68–353 (AKIRNIGIMA…AVTTYLPSPE (286 aa)) is the tr-type G domain. Residues 77–84 (AHIDAGKT), 141–145 (DTPGH), and 195–198 (NKMD) each bind GTP.

The protein belongs to the TRAFAC class translation factor GTPase superfamily. Classic translation factor GTPase family. EF-G/EF-2 subfamily.

It localises to the mitochondrion. The catalysed reaction is GTP + H2O = GDP + phosphate + H(+). Functionally, mitochondrial GTPase that mediates the disassembly of ribosomes from messenger RNA at the termination of mitochondrial protein biosynthesis. Acts in collaboration with MRRF. GTP hydrolysis follows the ribosome disassembly and probably occurs on the ribosome large subunit. Not involved in the GTP-dependent ribosomal translocation step during translation elongation. This chain is Ribosome-releasing factor 2, mitochondrial (Gfm2), found in Mus musculus (Mouse).